The sequence spans 311 residues: Formyltransferase/hydrolase complex subunit D (311 aa).

The protein belongs to the FTR family. In terms of assembly, homotetramer. Octaheteromer. Part of the formyltransferase/hydrolase complex fhc; composed of FhcA, FhcB, FhcC and FhcD.

The protein localises to the cytoplasm. It carries out the reaction N-formylmethanofuran + 5,6,7,8-tetrahydromethanopterin + H(+) = N(5)-formyl-5,6,7,8-tetrahydromethanopterin + methanofuran. It participates in one-carbon metabolism; formaldehyde degradation; formate from formaldehyde (H(4)MPT route): step 4/5. In terms of biological role, involved in the transformation of 5-formyl tetrahydromethanopterin (5-formyl-H(4)MPT) to methanofuran (MFR) and formate via the intermediate formylmethanofuran (formyl-MFR). Catalyzes the transfer of a formyl group from 5-formyl-H(4)MPT to MFR to produce tetrahydromethanopterin (H(4)MPT) and formyl-MFR, which is then hydrolyzed to formate and MFR. This is Formyltransferase/hydrolase complex subunit D from Methylorubrum extorquens (strain ATCC 14718 / DSM 1338 / JCM 2805 / NCIMB 9133 / AM1) (Methylobacterium extorquens).